We begin with the raw amino-acid sequence, 548 residues long: Probable malate:quinone oxidoreductase (548 aa).

This sequence belongs to the MQO family. FAD is required as a cofactor.

The enzyme catalyses (S)-malate + a quinone = a quinol + oxaloacetate. It participates in carbohydrate metabolism; tricarboxylic acid cycle; oxaloacetate from (S)-malate (quinone route): step 1/1. This chain is Probable malate:quinone oxidoreductase, found in Escherichia coli O6:K15:H31 (strain 536 / UPEC).